We begin with the raw amino-acid sequence, 195 residues long: Protein GrpE (195 aa).

The protein belongs to the GrpE family. Homodimer.

The protein localises to the cytoplasm. Participates actively in the response to hyperosmotic and heat shock by preventing the aggregation of stress-denatured proteins, in association with DnaK and GrpE. It is the nucleotide exchange factor for DnaK and may function as a thermosensor. Unfolded proteins bind initially to DnaJ; upon interaction with the DnaJ-bound protein, DnaK hydrolyzes its bound ATP, resulting in the formation of a stable complex. GrpE releases ADP from DnaK; ATP binding to DnaK triggers the release of the substrate protein, thus completing the reaction cycle. Several rounds of ATP-dependent interactions between DnaJ, DnaK and GrpE are required for fully efficient folding. This is Protein GrpE from Francisella tularensis subsp. mediasiatica (strain FSC147).